The primary structure comprises 328 residues: Flap endonuclease 1 (328 aa).

The N-domain stretch occupies residues 1–98; sequence MGVKLRDVVS…ETVSRRADIR (98 aa). 7 residues coordinate Mg(2+): D27, D80, E152, E154, D173, D175, and D226. The I-domain stretch occupies residues 116-247; sequence RAKKYAVRSS…RGLKLIREKG (132 aa). An interaction with PCNA region spans residues 320 to 328; it reads TQKSLEDWF.

This sequence belongs to the XPG/RAD2 endonuclease family. FEN1 subfamily. In terms of assembly, interacts with PCNA. PCNA stimulates the nuclease activity without altering cleavage specificity. The cofactor is Mg(2+).

Structure-specific nuclease with 5'-flap endonuclease and 5'-3' exonuclease activities involved in DNA replication and repair. During DNA replication, cleaves the 5'-overhanging flap structure that is generated by displacement synthesis when DNA polymerase encounters the 5'-end of a downstream Okazaki fragment. Binds the unpaired 3'-DNA end and kinks the DNA to facilitate 5' cleavage specificity. Cleaves one nucleotide into the double-stranded DNA from the junction in flap DNA, leaving a nick for ligation. Also involved in the base excision repair (BER) pathway. Acts as a genome stabilization factor that prevents flaps from equilibrating into structures that lead to duplications and deletions. Also possesses 5'-3' exonuclease activity on nicked or gapped double-stranded DNA. This chain is Flap endonuclease 1, found in Methanothermobacter thermautotrophicus (strain ATCC 29096 / DSM 1053 / JCM 10044 / NBRC 100330 / Delta H) (Methanobacterium thermoautotrophicum).